A 614-amino-acid chain; its full sequence is MSLAKRFVHLRKASPSFCLRGIYFSGLSYDGYREKLSRNALLHLKLDEAVDLFGEMVKSRPFPSIVEFSKLLSAIAKMKKFDLVISFGEKMEILGVSHNLYTYNIMINCLCRRSQLSFALAILGKMMKLGYGPSIVTLNSLLNGFCHGNRISEAVALVDQMVEMGYQPDTVTFTTLVHGLFQHNKASEAVALVERMVVKGCQPDLVTYGAVINGLCKRGEPDLALNLLNKMEKGKIEADVVIYSTVIDSLCKYRHVDDALNLFTEMDNKGIRPDVFTYSSLISCLCNYGRWSDASRLLSDMLERKINPNVVTFNSLIDAFAKEGKLIEAEKLFDEMIQRSIDPNIVTYNSLINGFCMHDRLDEAQQIFTLMVSKDCLPDVVTYNTLINGFCKAKKVVDGMELFRDMSRRGLVGNTVTYTTLIHGFFQASDCDNAQMVFKQMVSDGVHPNIMTYNTLLDGLCKNGKLEKAMVVFEYLQKSKMEPDIYTYNIMSEGMCKAGKVEDGWDLFCSLSLKGVKPDVIAYNTMISGFCKKGLKEEAYTLFIKMKEDGPLPDSGTYNTLIRAHLRDGDKAASAELIKEMRSCRFAGDASTYGLVTDMLHDGRLDKGFLEVLS.

Residues 1 to 7 (MSLAKRF) constitute a mitochondrion transit peptide. 15 PPR repeats span residues 64–98 (SIVEFSKLLSAIAKMKKFDLVISFGEKMEILGVSH), 99–133 (NLYTYNIMINCLCRRSQLSFALAILGKMMKLGYGP), 134–168 (SIVTLNSLLNGFCHGNRISEAVALVDQMVEMGYQP), 169–203 (DTVTFTTLVHGLFQHNKASEAVALVERMVVKGCQP), 204–238 (DLVTYGAVINGLCKRGEPDLALNLLNKMEKGKIEA), 239–273 (DVVIYSTVIDSLCKYRHVDDALNLFTEMDNKGIRP), 274–308 (DVFTYSSLISCLCNYGRWSDASRLLSDMLERKINP), 309–343 (NVVTFNSLIDAFAKEGKLIEAEKLFDEMIQRSIDP), 344–378 (NIVTYNSLINGFCMHDRLDEAQQIFTLMVSKDCLP), 379–413 (DVVTYNTLINGFCKAKKVVDGMELFRDMSRRGLVG), 414–448 (NTVTYTTLIHGFFQASDCDNAQMVFKQMVSDGVHP), 449–483 (NIMTYNTLLDGLCKNGKLEKAMVVFEYLQKSKMEP), 484–518 (DIYTYNIMSEGMCKAGKVEDGWDLFCSLSLKGVKP), 519–553 (DVIAYNTMISGFCKKGLKEEAYTLFIKMKEDGPLP), and 554–588 (DSGTYNTLIRAHLRDGDKAASAELIKEMRSCRFAG).

The protein belongs to the PPR family. P subfamily.

The protein localises to the mitochondrion. This is Pentatricopeptide repeat-containing protein At1g63080, mitochondrial from Arabidopsis thaliana (Mouse-ear cress).